The primary structure comprises 258 residues: Venom plasminogen activator GPV-PA (258 aa).

A signal peptide spans 1 to 18 (MVLIRVLANLLILQLSYA). A propeptide spanning residues 19–24 (QKSSEL) is cleaved from the precursor. The Peptidase S1 domain occupies 25–249 (VFGGRPCNIN…YTDWIQSIIA (225 aa)). Cystine bridges form between Cys31-Cys163, Cys50-Cys66, Cys98-Cys256, Cys142-Cys210, Cys174-Cys189, and Cys200-Cys225. An N-linked (GlcNAc...) asparagine glycan is attached at Asn44. Catalysis depends on charge relay system residues His65 and Asp110. N-linked (GlcNAc...) asparagine glycosylation is found at Asn121 and Asn185. Ser204 serves as the catalytic Charge relay system.

This sequence belongs to the peptidase S1 family. Snake venom subfamily. As to quaternary structure, monomer. In terms of tissue distribution, expressed by the venom gland.

Its subcellular location is the secreted. In terms of biological role, snake venom serine protease that activates plasminogen. The sequence is that of Venom plasminogen activator GPV-PA from Trimeresurus albolabris (White-lipped pit viper).